A 415-amino-acid chain; its full sequence is Serine hydroxymethyltransferase (415 aa).

Residues L117 and 121-123 (GHL) each bind (6S)-5,6,7,8-tetrahydrofolate. An N6-(pyridoxal phosphate)lysine modification is found at K226.

This sequence belongs to the SHMT family. In terms of assembly, homodimer. Pyridoxal 5'-phosphate is required as a cofactor.

The protein localises to the cytoplasm. It catalyses the reaction (6R)-5,10-methylene-5,6,7,8-tetrahydrofolate + glycine + H2O = (6S)-5,6,7,8-tetrahydrofolate + L-serine. Its pathway is one-carbon metabolism; tetrahydrofolate interconversion. It participates in amino-acid biosynthesis; glycine biosynthesis; glycine from L-serine: step 1/1. Its function is as follows. Catalyzes the reversible interconversion of serine and glycine with tetrahydrofolate (THF) serving as the one-carbon carrier. This reaction serves as the major source of one-carbon groups required for the biosynthesis of purines, thymidylate, methionine, and other important biomolecules. Also exhibits THF-independent aldolase activity toward beta-hydroxyamino acids, producing glycine and aldehydes, via a retro-aldol mechanism. In Dehalococcoides mccartyi (strain CBDB1), this protein is Serine hydroxymethyltransferase.